Reading from the N-terminus, the 271-residue chain is N-acylmannosamine 1-dehydrogenase (271 aa).

Residue 20-44 (VTGAAGGIGRATVEAYLREGASVVA) coordinates NAD(+). Residue serine 153 coordinates substrate. The active-site Proton acceptor is the tyrosine 166.

The protein belongs to the short-chain dehydrogenases/reductases (SDR) family.

The enzyme catalyses an N-acyl-D-mannosamine + NAD(+) = an N-acyl-D-mannosaminolactone + NADH + H(+). Acts on acetyl-D-mannosamine and glycolyl-D-mannosamine. This chain is N-acylmannosamine 1-dehydrogenase, found in Flavobacterium sp. (strain 141-8).